The following is a 314-amino-acid chain: tRNA pseudouridine synthase B (314 aa).

A substrate-binding site is contributed by histidine 43. The Nucleophile role is filled by aspartate 48. Substrate contacts are provided by tyrosine 76, tyrosine 179, and leucine 200.

It belongs to the pseudouridine synthase TruB family. Type 1 subfamily.

It carries out the reaction uridine(55) in tRNA = pseudouridine(55) in tRNA. In terms of biological role, responsible for synthesis of pseudouridine from uracil-55 in the psi GC loop of transfer RNAs. This is tRNA pseudouridine synthase B from Salmonella typhi.